Here is a 279-residue protein sequence, read N- to C-terminus: Osmoprotective compounds uptake permease protein GgtC (279 aa).

A run of 7 helical transmembrane segments spans residues 7 to 27 (LLFL…LSFF), 58 to 78 (LWLV…AVLV), 90 to 110 (IIFL…KFVY), 120 to 140 (IGLL…WLVE), 146 to 166 (FALI…ILSA), 202 to 222 (LLVV…IVFV), and 247 to 267 (FGRG…VMIT). An ABC transmembrane type-1 domain is found at 53–270 (FRNNLLWLVL…IVPVMITNIR (218 aa)).

The protein belongs to the binding-protein-dependent transport system permease family. The complex is composed of two ATP-binding proteins (GgtA), two transmembrane proteins (GgtC and GgtD) and a solute-binding protein (GgtB).

The protein resides in the cell membrane. Part of the ABC transporter complex GgtABCD involved in the uptake of the osmoprotective compounds glucosylglycerol (GG), sucrose and trehalose. Responsible for the translocation of the substrate across the membrane. The sequence is that of Osmoprotective compounds uptake permease protein GgtC from Synechocystis sp. (strain ATCC 27184 / PCC 6803 / Kazusa).